Here is a 185-residue protein sequence, read N- to C-terminus: Peptide deformylase (185 aa).

The Fe cation site is built by Cys112 and His155. Glu156 is an active-site residue. His159 provides a ligand contact to Fe cation.

Belongs to the polypeptide deformylase family. It depends on Fe(2+) as a cofactor.

The enzyme catalyses N-terminal N-formyl-L-methionyl-[peptide] + H2O = N-terminal L-methionyl-[peptide] + formate. Functionally, removes the formyl group from the N-terminal Met of newly synthesized proteins. Requires at least a dipeptide for an efficient rate of reaction. N-terminal L-methionine is a prerequisite for activity but the enzyme has broad specificity at other positions. The polypeptide is Peptide deformylase (Latilactobacillus sakei subsp. sakei (strain 23K) (Lactobacillus sakei subsp. sakei)).